Consider the following 473-residue polypeptide: Xylan O-acetyltransferase 14 (473 aa).

The segment covering 1–17 has biased composition (polar residues); the sequence is MTTTGSTPPRKNRSNVT. Positions 1 to 22 are disordered; the sequence is MTTTGSTPPRKNRSNVTGGEGG. The Cytoplasmic portion of the chain corresponds to 1 to 54; that stretch reads MTTTGSTPPRKNRSNVTGGEGGSLEEYAWRAAGEAAAAKKATRAWGVSVSLRSH. A helical; Signal-anchor for type II membrane protein membrane pass occupies residues 55–75; it reads FSSLVLLLLLLLVALAVSATT. Residues 76–101 form a disordered region; sequence KNGDPAETPHAPPLPPPASIKLPSSS. The Lumenal segment spans residues 76–473; that stretch reads KNGDPAETPH…NQLLYAHIVS (398 aa). Disulfide bonds link Cys-108–Cys-159, Cys-130–Cys-195, Cys-139–Cys-455, and Cys-370–Cys-451. A GDS motif motif is present at residues 182–184; that stretch reads GDS. The active-site Nucleophile is the Ser-184. N-linked (GlcNAc...) asparagine glycosylation is found at Asn-209, Asn-223, and Asn-414. Residue Asp-450 is the Proton donor of the active site. The DXXH motif signature appears at 450–453; sequence DCIH. His-453 (proton acceptor) is an active-site residue.

This sequence belongs to the PC-esterase family. TBL subfamily.

The protein localises to the golgi apparatus membrane. Its function is as follows. Xylan acetyltransferase required for 2-O- and 3-O-monoacetylation of xylosyl residues in xylan. Catalyzes the 2-O-acetylation of xylan, followed by nonenzymatic acetyl migration to the O-3 position, resulting in products that are monoacetylated at both O-2 and O-3 positions. The polypeptide is Xylan O-acetyltransferase 14 (Oryza sativa subsp. japonica (Rice)).